A 430-amino-acid chain; its full sequence is Long-chain specific acyl-CoA dehydrogenase, mitochondrial (430 aa).

The N-terminal 30 residues, 1–30, are a transit peptide targeting the mitochondrion; that stretch reads MAARLLLRSLRVLSARSATLPPPSARCSHS. Residue Lys-42 is modified to N6-acetyllysine. Ser-54 and Ser-55 each carry phosphoserine. N6-acetyllysine; alternate occurs at positions 66 and 81. N6-succinyllysine; alternate occurs at positions 66 and 81. N6-acetyllysine occurs at positions 92 and 95. Residue Lys-165 is modified to N6-succinyllysine. 170-179 serves as a coordination point for FAD; that stretch reads IAMTEPGAGS. Residue Ser-179 coordinates substrate. The residue at position 191 (Ser-191) is a Phosphoserine. 203–205 serves as a coordination point for FAD; it reads FIT. 227 to 228 lines the substrate pocket; sequence AH. Lys-240 bears the N6-succinyllysine mark. An N6-acetyllysine; alternate mark is found at Lys-254 and Lys-279. Lys-254 and Lys-279 each carry N6-succinyllysine; alternate. Residues Tyr-282 and 289-292 contribute to the substrate site; that span reads PQER. The active-site Proton acceptor is the Glu-291. An FAD-binding site is contributed by Arg-317. An N6-acetyllysine modification is found at Lys-318. Position 322 is an N6-acetyllysine; alternate (Lys-322). Lys-322 carries the post-translational modification N6-succinyllysine; alternate. Gln-328 is an FAD binding site. N6-acetyllysine is present on Lys-358. At Ser-362 the chain carries Phosphoserine. 385 to 389 is a binding site for FAD; sequence QLHGG. Position 412 to 413 (412 to 413) interacts with substrate; that stretch reads GG. An FAD-binding site is contributed by 414–416; that stretch reads TNE.

This sequence belongs to the acyl-CoA dehydrogenase family. In terms of assembly, homotetramer. FAD serves as cofactor. In terms of processing, acetylation at Lys-318 and Lys-322 in proximity of the cofactor-binding sites strongly reduces catalytic activity. These sites are deacetylated by SIRT3.

The protein localises to the mitochondrion matrix. It carries out the reaction a long-chain 2,3-saturated fatty acyl-CoA + oxidized [electron-transfer flavoprotein] + H(+) = a long-chain (2E)-enoyl-CoA + reduced [electron-transfer flavoprotein]. The catalysed reaction is octanoyl-CoA + oxidized [electron-transfer flavoprotein] + H(+) = (2E)-octenoyl-CoA + reduced [electron-transfer flavoprotein]. The enzyme catalyses decanoyl-CoA + oxidized [electron-transfer flavoprotein] + H(+) = (2E)-decenoyl-CoA + reduced [electron-transfer flavoprotein]. It catalyses the reaction dodecanoyl-CoA + oxidized [electron-transfer flavoprotein] + H(+) = (2E)-dodecenoyl-CoA + reduced [electron-transfer flavoprotein]. It carries out the reaction tetradecanoyl-CoA + oxidized [electron-transfer flavoprotein] + H(+) = (2E)-tetradecenoyl-CoA + reduced [electron-transfer flavoprotein]. The catalysed reaction is oxidized [electron-transfer flavoprotein] + hexadecanoyl-CoA + H(+) = (2E)-hexadecenoyl-CoA + reduced [electron-transfer flavoprotein]. The enzyme catalyses octadecanoyl-CoA + oxidized [electron-transfer flavoprotein] + H(+) = (2E)-octadecenoyl-CoA + reduced [electron-transfer flavoprotein]. It catalyses the reaction (5E)-tetradecenoyl-CoA + oxidized [electron-transfer flavoprotein] + H(+) = (2E,5E)-tetradecadienoyl-CoA + reduced [electron-transfer flavoprotein]. It carries out the reaction (5Z)-tetradecenoyl-CoA + oxidized [electron-transfer flavoprotein] + H(+) = (2E,5Z)-tetradecadienoyl-CoA + reduced [electron-transfer flavoprotein]. The catalysed reaction is oxidized [electron-transfer flavoprotein] + (9Z)-octadecenoyl-CoA + H(+) = (2E,9Z)-octadecadienoyl-CoA + reduced [electron-transfer flavoprotein]. The enzyme catalyses hexanoyl-CoA + oxidized [electron-transfer flavoprotein] + H(+) = (2E)-hexenoyl-CoA + reduced [electron-transfer flavoprotein]. It catalyses the reaction eicosanoyl-CoA + oxidized [electron-transfer flavoprotein] + H(+) = (2E)-eicosenoyl-CoA + reduced [electron-transfer flavoprotein]. It carries out the reaction docosanoyl-CoA + oxidized [electron-transfer flavoprotein] + H(+) = (2E)-docosenoyl-CoA + reduced [electron-transfer flavoprotein]. The catalysed reaction is tetracosanoyl-CoA + oxidized [electron-transfer flavoprotein] + H(+) = (2E)-tetracosenoyl-CoA + reduced [electron-transfer flavoprotein]. It functions in the pathway lipid metabolism; mitochondrial fatty acid beta-oxidation. Inhibited by crotonyl-CoA, 2-octenoyl-CoA and 2-hexadecenoyl-CoA. Functionally, long-chain specific acyl-CoA dehydrogenase is one of the acyl-CoA dehydrogenases that catalyze the first step of mitochondrial fatty acid beta-oxidation, an aerobic process breaking down fatty acids into acetyl-CoA and allowing the production of energy from fats. The first step of fatty acid beta-oxidation consists in the removal of one hydrogen from C-2 and C-3 of the straight-chain fatty acyl-CoA thioester, resulting in the formation of trans-2-enoyl-CoA. Among the different mitochondrial acyl-CoA dehydrogenases, long-chain specific acyl-CoA dehydrogenase can act on saturated and unsaturated acyl-CoAs with 6 to 24 carbons with a preference for 8 to 18 carbons long primary chains. This chain is Long-chain specific acyl-CoA dehydrogenase, mitochondrial, found in Rattus norvegicus (Rat).